The primary structure comprises 522 residues: Pectinesterase/pectinesterase inhibitor PPE8B (522 aa).

An N-terminal signal peptide occupies residues 1-30 (MPYLLMASHNPLPAGKQLLLLVLLCAFFSS). Residues 31–174 (SFIPFASCSI…TSLVQELLTQ (144 aa)) form a pectinesterase inhibitor PPE8B region. Asn105, Asn118, Asn119, Asn218, Asn221, and Asn274 each carry an N-linked (GlcNAc...) asparagine glycan. The tract at residues 208 to 506 (DAIVAQDGTG…YTVAQFIEGN (299 aa)) is pectinesterase PPE8B. Residues Thr283 and Gln313 each contribute to the substrate site. Asp336 functions as the Proton donor; for pectinesterase activity in the catalytic mechanism. An intrachain disulfide couples Cys350 to Cys370. The active-site Nucleophile; for pectinesterase activity is Asp357. Asn405 is a glycosylation site (N-linked (GlcNAc...) asparagine). Residues Arg426 and Trp428 each coordinate substrate. Asn489 and Asn496 each carry an N-linked (GlcNAc...) asparagine glycan.

In the N-terminal section; belongs to the PMEI family. This sequence in the C-terminal section; belongs to the pectinesterase family.

The protein localises to the secreted. It localises to the cell wall. The catalysed reaction is [(1-&gt;4)-alpha-D-galacturonosyl methyl ester](n) + n H2O = [(1-&gt;4)-alpha-D-galacturonosyl](n) + n methanol + n H(+). Its pathway is glycan metabolism; pectin degradation; 2-dehydro-3-deoxy-D-gluconate from pectin: step 1/5. May have roles in the deposition of pectin in developing tissues and in the wall loosening and cell separation that occurs in cell expansion, fruit ripening and abscission. The chain is Pectinesterase/pectinesterase inhibitor PPE8B from Prunus persica (Peach).